A 585-amino-acid chain; its full sequence is Nucleoporin p58/p45 (585 aa).

Repeat copies occupy residues 7 to 8 (FG), 30 to 31 (FG), 42 to 43 (FG), 61 to 62 (FG), and 66 to 67 (FG). The interval 7-565 (FGSGTLGSTT…VSNPASAGFG (559 aa)) is 14 X 2 AA repeats of F-G. The interval 194–232 (TSAASSEGLGGIDFSTSSDKKSDKTGTRPEDSKALKDEN) is disordered. Positions 211–232 (SDKKSDKTGTRPEDSKALKDEN) are enriched in basic and acidic residues. Coiled-coil stretches lie at residues 242–262 (ENLQ…SRMS) and 300–367 (ETAQ…SHIT). At Thr-317 the chain carries Phosphothreonine. 9 repeat units span residues 474–475 (FG), 478–479 (FG), 499–500 (FG), 505–506 (FG), 515–516 (FG), 517–518 (FG), 531–532 (FG), 554–555 (FG), and 564–565 (FG). The interval 563–585 (GFGTGGQLLQLKRPPAGNKRGKR) is disordered.

The protein belongs to the NUP58 family. In terms of assembly, component of the p62 complex, a complex composed of NUP62, NUP54, and isoform p58 and isoform p45 of NUP58. Isoform p58 interacts with NUTF2. Isoform p58 interacts with SRP1-alpha and Importin p97 proteins when they are together, but not with SRP1-alpha protein alone. O-glycosylated. As to expression, expressed in liver.

It localises to the nucleus. Its subcellular location is the nuclear pore complex. The protein resides in the nucleus membrane. Component of the nuclear pore complex, a complex required for the trafficking across the nuclear membrane. This Rattus norvegicus (Rat) protein is Nucleoporin p58/p45.